We begin with the raw amino-acid sequence, 238 residues long: Sugar fermentation stimulation protein homolog (238 aa).

Belongs to the SfsA family.

The chain is Sugar fermentation stimulation protein homolog from Brucella abortus (strain S19).